We begin with the raw amino-acid sequence, 865 residues long: Alanine--tRNA ligase (865 aa).

Residues H552, H556, C654, and H658 each contribute to the Zn(2+) site.

The protein belongs to the class-II aminoacyl-tRNA synthetase family. Requires Zn(2+) as cofactor.

The protein resides in the cytoplasm. It carries out the reaction tRNA(Ala) + L-alanine + ATP = L-alanyl-tRNA(Ala) + AMP + diphosphate. Its function is as follows. Catalyzes the attachment of alanine to tRNA(Ala) in a two-step reaction: alanine is first activated by ATP to form Ala-AMP and then transferred to the acceptor end of tRNA(Ala). Also edits incorrectly charged Ser-tRNA(Ala) and Gly-tRNA(Ala) via its editing domain. The chain is Alanine--tRNA ligase from Coxiella burnetii (strain RSA 331 / Henzerling II).